A 147-amino-acid polypeptide reads, in one-letter code: Large ribosomal subunit protein uL15 (147 aa).

Residues 1–42 form a disordered region; the sequence is MTIKLHHLRPAPGAKTDKTRVGRGEGSKGKTAGRGTKGTKAR. Basic and acidic residues predominate over residues 15 to 28; that stretch reads KTDKTRVGRGEGSK.

Belongs to the universal ribosomal protein uL15 family. As to quaternary structure, part of the 50S ribosomal subunit.

In terms of biological role, binds to the 23S rRNA. The sequence is that of Large ribosomal subunit protein uL15 from Nocardia farcinica (strain IFM 10152).